A 139-amino-acid polypeptide reads, in one-letter code: Insulin-like growth factor (139 aa).

The first 38 residues, 1-38, serve as a signal peptide directing secretion; the sequence is YIRRVRQGSIYSLLVESQQWCKLTLTLLLLLALLTRCT. The segment at 39–67 is b; the sequence is LSETLCGSELVDTLQFVCDDRGFFFVPQH. A c region spans residues 68-82; it reads VPPRRGAHRRSRARK. Positions 83 to 103 are a; the sequence is GIVEECCFKGCSLRLLEMYCA. A d region spans residues 104–113; the sequence is RPSKAERDVA. Positions 108 to 139 are disordered; that stretch reads AERDVARPRQRPHRASQHSRRGSQSRGRGRSR. The interval 114 to 139 is e; the sequence is RPRQRPHRASQHSRRGSQSRGRGRSR. Positions 115–139 are enriched in basic residues; sequence PRQRPHRASQHSRRGSQSRGRGRSR.

This sequence belongs to the insulin family.

The protein localises to the secreted. Its function is as follows. The insulin-like growth factors, isolated from plasma, are structurally and functionally related to insulin but have a much higher growth-promoting activity. The polypeptide is Insulin-like growth factor (Myxine glutinosa (Atlantic hagfish)).